The chain runs to 507 residues: 25-hydroxyvitamin D-1 alpha hydroxylase, mitochondrial (507 aa).

C454 is a binding site for heme.

Belongs to the cytochrome P450 family. Heme is required as a cofactor. In terms of tissue distribution, kidney.

The protein resides in the mitochondrion membrane. The catalysed reaction is calcidiol + 2 reduced [adrenodoxin] + O2 + 2 H(+) = calcitriol + 2 oxidized [adrenodoxin] + H2O. The enzyme catalyses secalciferol + 2 reduced [adrenodoxin] + O2 + 2 H(+) = calcitetrol + 2 oxidized [adrenodoxin] + H2O. It catalyses the reaction 25-hydroxy-24-oxocalciol + 2 reduced [adrenodoxin] + O2 + 2 H(+) = (1S)-1,25-dihydroxy-24-oxocalciol + 2 oxidized [adrenodoxin] + H2O. It carries out the reaction 25-hydroxyvitamin D2 + 2 reduced [adrenodoxin] + O2 + 2 H(+) = 1alpha,25-dihydroxyvitamin D2 + 2 oxidized [adrenodoxin] + H2O. It functions in the pathway hormone biosynthesis; vitamin D biosynthesis. With respect to regulation, activated by cardiolipin and dioleoyl phosphatidylethanolamine (DOPE), phospholipids found in the inner mitochondrial membrane. Inhibited by high substrate concentration. In terms of biological role, a cytochrome P450 monooxygenase involved in vitamin D metabolism and in calcium and phosphorus homeostasis. Catalyzes the rate-limiting step in the activation of vitamin D in the kidney, namely the hydroxylation of 25-hydroxyvitamin D3/calcidiol at the C1-alpha position to form the hormonally active form of vitamin D3, 1alpha,25-dihydroxyvitamin D3/calcitriol that acts via the vitamin D receptor (VDR). Has 1-alpha-hydroxylase activity on vitamin D intermediates of the CYP24A1-mediated inactivation pathway. Converts 24R,25-dihydroxyvitamin D3/secalciferol to 1-alpha,24,25-trihydroxyvitamin D3, an active ligand of VDR. Also active on 25-hydroxyvitamin D2. Mechanistically, uses molecular oxygen inserting one oxygen atom into a substrate, and reducing the second into a water molecule, with two electrons provided by NADPH via FDXR/adrenodoxin reductase and FDX1/adrenodoxin. In Mus musculus (Mouse), this protein is 25-hydroxyvitamin D-1 alpha hydroxylase, mitochondrial (Cyp27b1).